Here is a 107-residue protein sequence, read N- to C-terminus: Prokineticin-2 (107 aa).

The first 26 residues, Met-1–Ala-26, serve as a signal peptide directing secretion. Intrachain disulfides connect Cys-33–Cys-45, Cys-39–Cys-57, Cys-44–Cys-85, Cys-67–Cys-93, and Cys-87–Cys-103.

This sequence belongs to the AVIT (prokineticin) family. Expressed at high levels in testis and at lower levels in brain, lung, ovary, spleen, thymus and uterus.

The protein localises to the secreted. In terms of biological role, may function as an output molecule from the suprachiasmatic nucleus (SCN) that transmits behavioral circadian rhythm. May also function locally within the SCN to synchronize output. Potently contracts gastrointestinal (GI) smooth muscle. This chain is Prokineticin-2 (Prok2), found in Rattus norvegicus (Rat).